Consider the following 247-residue polypeptide: Cell division protein ZapD (247 aa).

This sequence belongs to the ZapD family. As to quaternary structure, interacts with FtsZ.

It is found in the cytoplasm. Functionally, cell division factor that enhances FtsZ-ring assembly. Directly interacts with FtsZ and promotes bundling of FtsZ protofilaments, with a reduction in FtsZ GTPase activity. This chain is Cell division protein ZapD, found in Cronobacter sakazakii (strain ATCC BAA-894) (Enterobacter sakazakii).